Here is a 56-residue protein sequence, read N- to C-terminus: Protein hunchback (56 aa).

C2H2-type zinc fingers lie at residues 1–5, 11–33, and 39–56; these read HVRNH, HKCGKCNYSCVNKSMLNSHMKSH, and YRCADCTYATKYCHSLKL.

Belongs to the hunchback C2H2-type zinc-finger protein family.

The protein localises to the nucleus. In terms of biological role, gap class segmentation protein that controls development of head structures. The sequence is that of Protein hunchback (hb) from Bithynia tentaculata (Spire snail).